A 336-amino-acid chain; its full sequence is Potassium channel subfamily K member 1 (336 aa).

Topologically, residues 1-20 are cytoplasmic; it reads MLQSLAGSSCVRLVERHRSA. The chain crosses the membrane as a helical span at residues 21–41; that stretch reads WCFGLLVLGYLLYLVFGAVVF. Over 42-103 the chain is Extracellular; the sequence is SSVELPYEDL…SNASGNWNWD (62 aa). Residue Asn-95 is glycosylated (N-linked (GlcNAc...) asparagine). The helical intramembrane region spans 104-116; that stretch reads FTSALFFASTVLS. The stretch at 117 to 122 is an intramembrane region; that stretch reads TTGYGH. The tract at residues 117–122 is selectivity filter 1; the sequence is TTGYGH. Residues 123-132 are Extracellular-facing; sequence TVPLSDGGKA. Residues 133–156 form a helical membrane-spanning segment; the sequence is FCIIYSVIGIPFTLLFLTAVVQRI. The Cytoplasmic portion of the chain corresponds to 157–181; sequence TVHVTRRPVLYFHIRWGFSKQMVGI. The chain crosses the membrane as a helical span at residues 182-202; it reads VHAVVLGFVTVSCFFFIPAAV. The Extracellular segment spans residues 203–211; sequence FSVLEDDWN. Positions 212–224 form an intramembrane region, helical; that stretch reads FLESFYFCFISLS. The segment at 225–230 is selectivity filter 2; the sequence is TIGLGD. Residues 225–231 lie within the membrane without spanning it; sequence TIGLGDY. Topologically, residues 232–243 are extracellular; the sequence is VPGEGYNQKFRE. A helical transmembrane segment spans residues 244 to 267; sequence LYKIGITCYLLLGLIAMLVVLETF. The Cytoplasmic segment spans residues 268-336; the sequence is CELHELKKFR…SAYAEDSASH (69 aa). Lys-274 participates in a covalent cross-link: Glycyl lysine isopeptide (Lys-Gly) (interchain with G-Cter in SUMO). Residues 293–299 form an important for intracellular retention in recycling endosomes region; it reads IVEHDQL.

This sequence belongs to the two pore domain potassium channel (TC 1.A.1.8) family. In terms of assembly, homodimer; disulfide-linked. Heterodimer with KCNK2; disulfide-linked. In astrocytes, forms mostly heterodimeric potassium channels with KCNK2, with only a minor proportion of functional channels containing homodimeric KCNK1. Interacts with KCNK3 and KCNK9, forming functional heterodimeric channels. Interacts with GNG4. Identified in a complex with PSD and ARF6; interacts only with PSD that is bound to ARF6. Interacts with UBE2I. Post-translationally, sumoylation is controversial. Sumoylated by UBE2I. Not sumoylated when expressed in xenopus oocytes or mammalian cells. Sumoylation inactivates the channel, but does not interfere with expression at the cell membrane. Sumoylation of a single subunit is sufficient to silence the dimeric channel. Sumoylation of KCNK1 is sufficient to silence heterodimeric channels formed by KCNK1 and KCNK3 or KCNK9. Desumoylated by SENP1; this activates the channel. Desumoylated by SENP1; this strongly increases halothane-mediated activation of heterodimeric channels formed with KCNK9. SENP1 treatment has no effect.

The protein localises to the cell membrane. The protein resides in the recycling endosome. It localises to the synaptic cell membrane. It is found in the cytoplasmic vesicle. Its subcellular location is the perikaryon. The protein localises to the cell projection. The protein resides in the dendrite. It localises to the apical cell membrane. It catalyses the reaction K(+)(in) = K(+)(out). It carries out the reaction NH4(+)(in) = NH4(+)(out). The catalysed reaction is Na(+)(in) = Na(+)(out). The enzyme catalyses Rb(+)(in) = Rb(+)(out). It catalyses the reaction Cs(+)(in) = Cs(+)(out). It carries out the reaction Li(+)(in) = Li(+)(out). The catalysed reaction is L-glutamate(out) = L-glutamate(in). The enzyme catalyses chloride(in) = chloride(out). Functionally, ion channel that contributes to passive transmembrane potassium transport and to the regulation of the resting membrane potential in brain astrocytes, but also in kidney and in other tissues. Forms dimeric channels through which potassium ions pass in accordance with their electrochemical gradient. The channel is selective for K(+) ions at physiological potassium concentrations and at neutral pH, but becomes permeable to Na(+) at subphysiological K(+) levels and upon acidification of the extracellular medium. The homodimer has very low potassium channel activity, when expressed in heterologous systems, and can function as weakly inward rectifying potassium channel. Channel activity is modulated by activation of serotonin receptors. Heterodimeric channels containing KCNK1 and KCNK2 have much higher activity, and may represent the predominant form in astrocytes. Heterodimeric channels containing KCNK1 and KCNK3 or KCNK9 have much higher activity. Heterodimeric channels formed by KCNK1 and KCNK9 may contribute to halothane-sensitive currents. Mediates outward rectifying potassium currents in dentate gyrus granule cells and contributes to the regulation of their resting membrane potential. Contributes to the regulation of action potential firing in dentate gyrus granule cells and down-regulates their intrinsic excitability. In astrocytes, the heterodimer formed by KCNK1 and KCNK2 is required for rapid glutamate release in response to activation of G-protein coupled receptors, such as F2R and CNR1. Required for normal ion and water transport in the kidney. Contributes to the regulation of the resting membrane potential of pancreatic beta cells. The low channel activity of homodimeric KCNK1 may be due to sumoylation. The low channel activity may be due to rapid internalization from the cell membrane and retention in recycling endosomes. Permeable to monovalent cations with ion selectivity for K(+) &gt; Rb(+) &gt;&gt; NH4(+) &gt;&gt; Cs(+) = Na(+) = Li(+). The sequence is that of Potassium channel subfamily K member 1 from Cavia porcellus (Guinea pig).